Consider the following 313-residue polypeptide: 4-hydroxy-3-methylbut-2-enyl diphosphate reductase (313 aa).

Cys-12 contacts [4Fe-4S] cluster. (2E)-4-hydroxy-3-methylbut-2-enyl diphosphate is bound by residues His-41 and His-74. The dimethylallyl diphosphate site is built by His-41 and His-74. Isopentenyl diphosphate is bound by residues His-41 and His-74. [4Fe-4S] cluster is bound at residue Cys-96. His-124 lines the (2E)-4-hydroxy-3-methylbut-2-enyl diphosphate pocket. His-124 lines the dimethylallyl diphosphate pocket. His-124 contributes to the isopentenyl diphosphate binding site. Glu-126 functions as the Proton donor in the catalytic mechanism. Thr-167 contacts (2E)-4-hydroxy-3-methylbut-2-enyl diphosphate. A [4Fe-4S] cluster-binding site is contributed by Cys-197. The (2E)-4-hydroxy-3-methylbut-2-enyl diphosphate site is built by Ser-225, Ser-226, Asn-227, and Ser-269. Positions 225, 226, 227, and 269 each coordinate dimethylallyl diphosphate. Isopentenyl diphosphate contacts are provided by Ser-225, Ser-226, Asn-227, and Ser-269.

The protein belongs to the IspH family. As to quaternary structure, homodimer. The cofactor is [4Fe-4S] cluster.

It catalyses the reaction isopentenyl diphosphate + 2 oxidized [2Fe-2S]-[ferredoxin] + H2O = (2E)-4-hydroxy-3-methylbut-2-enyl diphosphate + 2 reduced [2Fe-2S]-[ferredoxin] + 2 H(+). The catalysed reaction is dimethylallyl diphosphate + 2 oxidized [2Fe-2S]-[ferredoxin] + H2O = (2E)-4-hydroxy-3-methylbut-2-enyl diphosphate + 2 reduced [2Fe-2S]-[ferredoxin] + 2 H(+). Its pathway is isoprenoid biosynthesis; dimethylallyl diphosphate biosynthesis; dimethylallyl diphosphate from (2E)-4-hydroxy-3-methylbutenyl diphosphate: step 1/1. The protein operates within isoprenoid biosynthesis; isopentenyl diphosphate biosynthesis via DXP pathway; isopentenyl diphosphate from 1-deoxy-D-xylulose 5-phosphate: step 6/6. Its function is as follows. Catalyzes the conversion of 1-hydroxy-2-methyl-2-(E)-butenyl 4-diphosphate (HMBPP) into a mixture of isopentenyl diphosphate (IPP) and dimethylallyl diphosphate (DMAPP). Acts in the terminal step of the DOXP/MEP pathway for isoprenoid precursor biosynthesis. In Buchnera aphidicola subsp. Schizaphis graminum (strain Sg), this protein is 4-hydroxy-3-methylbut-2-enyl diphosphate reductase.